The sequence spans 372 residues: Glutamine synthetase (372 aa).

Residues 26–105 (IIAEYVWIDS…VLAECWNNDG (80 aa)) enclose the GS beta-grasp domain. The GS catalytic domain occupies 112–372 (HRHEAAKLFE…MTKEYERESL (261 aa)).

This sequence belongs to the glutamine synthetase family. Homooctamer.

It is found in the cytoplasm. The catalysed reaction is L-glutamate + NH4(+) + ATP = L-glutamine + ADP + phosphate + H(+). The chain is Glutamine synthetase (GLN1) from Kluyveromyces lactis (strain ATCC 8585 / CBS 2359 / DSM 70799 / NBRC 1267 / NRRL Y-1140 / WM37) (Yeast).